We begin with the raw amino-acid sequence, 295 residues long: Ethanolamine ammonia-lyase small subunit (295 aa).

Residues valine 207, glutamate 228, and cysteine 258 each contribute to the adenosylcob(III)alamin site.

This sequence belongs to the EutC family. The basic unit is a heterodimer which dimerizes to form tetramers. The heterotetramers trimerize; 6 large subunits form a core ring with 6 small subunits projecting outwards. The cofactor is adenosylcob(III)alamin.

It localises to the bacterial microcompartment. The enzyme catalyses ethanolamine = acetaldehyde + NH4(+). The protein operates within amine and polyamine degradation; ethanolamine degradation. Its function is as follows. Catalyzes the deamination of various vicinal amino-alcohols to oxo compounds. Allows this organism to utilize ethanolamine as the sole source of nitrogen and carbon in the presence of external vitamin B12. The chain is Ethanolamine ammonia-lyase small subunit from Escherichia coli (strain 55989 / EAEC).